Consider the following 151-residue polypeptide: Cathelicidin-3 (151 aa).

The first 17 residues, 1–17, serve as a signal peptide directing secretion; it reads MLSCWVLLLALLGGACA. Residues 18–122 constitute a propeptide that is removed on maturation; sequence LPAPLGYSQA…TCVDSMADPV (105 aa). 2 disulfide bridges follow: Cys75–Cys86 and Cys97–Cys114. Residues 128 to 148 form a helical membrane-spanning segment; the sequence is WPLVPVAINTVAAGINLYKAI.

It belongs to the cathelicidin family. As to expression, detected in bone marrow, liver and lung.

The protein localises to the secreted. The protein resides in the membrane. May bind bacterial lipopolysaccharide (LPS). May have antimicrobial activity and play a role in the innate immune response. The polypeptide is Cathelicidin-3 (CATHL3) (Gallus gallus (Chicken)).